We begin with the raw amino-acid sequence, 527 residues long: DNA polymerase epsilon subunit 2 (527 aa).

Belongs to the DNA polymerase epsilon subunit B family. As to quaternary structure, component of the DNA polymerase epsilon complex consisting of four subunits: the catalytic subunit POLE and the accessory subunits POLE2, POLE3 and POLE4.

It is found in the nucleus. Functionally, accessory component of the DNA polymerase epsilon complex. Participates in DNA repair and in chromosomal DNA replication. The polypeptide is DNA polymerase epsilon subunit 2 (POLE2) (Bos taurus (Bovine)).